A 130-amino-acid chain; its full sequence is Fluoride-specific ion channel FluC (130 aa).

Transmembrane regions (helical) follow at residues 10 to 30, 41 to 61, 72 to 89, and 105 to 125; these read FAVA…SLWF, GTLI…TVAM, LLFG…STYE, and LVYW…GILL. Na(+) is bound by residues glycine 80 and threonine 83.

It belongs to the fluoride channel Fluc/FEX (TC 1.A.43) family.

Its subcellular location is the cell inner membrane. It catalyses the reaction fluoride(in) = fluoride(out). Na(+) is not transported, but it plays an essential structural role and its presence is essential for fluoride channel function. Functionally, fluoride-specific ion channel. Important for reducing fluoride concentration in the cell, thus reducing its toxicity. This chain is Fluoride-specific ion channel FluC, found in Synechococcus sp. (strain JA-2-3B'a(2-13)) (Cyanobacteria bacterium Yellowstone B-Prime).